The primary structure comprises 459 residues: tRNA modification GTPase MnmE (459 aa).

R29, E86, and K125 together coordinate (6S)-5-formyl-5,6,7,8-tetrahydrofolate. The TrmE-type G domain maps to 221–382 (GMNVVIAGRP…LTEHLKAVMG (162 aa)). N231 provides a ligand contact to K(+). Residues 231-236 (NAGKSS), 250-256 (TNIEGTT), and 275-278 (DTAG) each bind GTP. S235 contacts Mg(2+). K(+)-binding residues include T250, I252, and T255. T256 provides a ligand contact to Mg(2+). K459 contributes to the (6S)-5-formyl-5,6,7,8-tetrahydrofolate binding site.

It belongs to the TRAFAC class TrmE-Era-EngA-EngB-Septin-like GTPase superfamily. TrmE GTPase family. As to quaternary structure, homodimer. Heterotetramer of two MnmE and two MnmG subunits. It depends on K(+) as a cofactor.

The protein localises to the cytoplasm. Exhibits a very high intrinsic GTPase hydrolysis rate. Involved in the addition of a carboxymethylaminomethyl (cmnm) group at the wobble position (U34) of certain tRNAs, forming tRNA-cmnm(5)s(2)U34. The polypeptide is tRNA modification GTPase MnmE (Marinomonas sp. (strain MWYL1)).